The chain runs to 98 residues: uncharacterized protein (98 aa).

The 69-residue stretch at Lys30 to Glu98 folds into the MOSC domain.

This is an uncharacterized protein from Haemophilus influenzae (strain ATCC 51907 / DSM 11121 / KW20 / Rd).